The sequence spans 337 residues: Inositol 2-dehydrogenase (337 aa).

The protein belongs to the Gfo/Idh/MocA family. Homotetramer.

The enzyme catalyses myo-inositol + NAD(+) = scyllo-inosose + NADH + H(+). Its function is as follows. Involved in the oxidation of myo-inositol (MI) to 2-keto-myo-inositol (2KMI or 2-inosose). This Klebsiella pneumoniae (strain 342) protein is Inositol 2-dehydrogenase.